The following is a 637-amino-acid chain: Phosphomethylpyrimidine synthase (637 aa).

Substrate contacts are provided by residues N242, M271, Y300, H336, 356 to 358 (SRG), 397 to 400 (DGLR), and E436. H440 is a binding site for Zn(2+). Y463 lines the substrate pocket. H504 provides a ligand contact to Zn(2+). Residues C584, C587, and C592 each coordinate [4Fe-4S] cluster.

The protein belongs to the ThiC family. In terms of assembly, homodimer. Requires [4Fe-4S] cluster as cofactor.

The enzyme catalyses 5-amino-1-(5-phospho-beta-D-ribosyl)imidazole + S-adenosyl-L-methionine = 4-amino-2-methyl-5-(phosphooxymethyl)pyrimidine + CO + 5'-deoxyadenosine + formate + L-methionine + 3 H(+). It functions in the pathway cofactor biosynthesis; thiamine diphosphate biosynthesis. In terms of biological role, catalyzes the synthesis of the hydroxymethylpyrimidine phosphate (HMP-P) moiety of thiamine from aminoimidazole ribotide (AIR) in a radical S-adenosyl-L-methionine (SAM)-dependent reaction. This chain is Phosphomethylpyrimidine synthase, found in Bordetella pertussis (strain Tohama I / ATCC BAA-589 / NCTC 13251).